The primary structure comprises 85 residues: Large ribosomal subunit protein bL31B (85 aa).

This sequence belongs to the bacterial ribosomal protein bL31 family. Type B subfamily. In terms of assembly, part of the 50S ribosomal subunit.

The polypeptide is Large ribosomal subunit protein bL31B (Serratia proteamaculans (strain 568)).